Consider the following 215-residue polypeptide: High mobility group protein B1 (215 aa).

Residue 1–10 participates in heparin binding; it reads MGKGDPKKPR. The segment at 1-97 is sufficient for interaction with HAVCR2; the sequence is MGKGDPKKPR…KFKDPNAPKR (97 aa). 4 positions are modified to N6-acetyllysine: Lys-3, Lys-7, Lys-8, and Lys-12. The segment at 3–15 is LPS binding (delipidated); that stretch reads KGDPKKPRGKMSS. Positions 9 to 79 form a DNA-binding region, HMG box 1; it reads PRGKMSSYAF…RYEREMKTYI (71 aa). Cys-23 carries the post-translational modification Cysteine sulfonic acid (-SO3H); alternate. A disulfide bridge connects residues Cys-23 and Cys-45. An NLS 1 region spans residues 27-43; that stretch reads HKKKHPDASVNFSEFSK. Positions 27–43 match the Nuclear localization signal (NLS) 1 motif; it reads HKKKHPDASVNFSEFSK. N6-acetyllysine occurs at positions 28, 29, and 30. Lys-28 participates in a covalent cross-link: Isoglutamyl lysine isopeptide (Lys-Gln) (interchain with Q-?). The residue at position 35 (Ser-35) is a Phosphoserine. Residue Lys-43 is modified to N6-acetyllysine. Isoglutamyl lysine isopeptide (Lys-Gln) (interchain with Q-?) cross-links involve residues Lys-43 and Lys-44. The residue at position 45 (Cys-45) is a Cysteine sulfonic acid (-SO3H); alternate. Residue Lys-68 forms an Isoglutamyl lysine isopeptide (Lys-Gln) (interchain with Q-?) linkage. The disordered stretch occupies residues 76–95; it reads KTYIPPKGETKKKFKDPNAP. Residues 80–96 are LPS binding (Lipid A); sequence PPKGETKKKFKDPNAPK. The span at 83–94 shows a compositional bias: basic and acidic residues; sequence GETKKKFKDPNA. The tract at residues 89 to 108 is cytokine-stimulating activity; the sequence is FKDPNAPKRPPSAFFLFCSE. Lys-90 carries the post-translational modification N6-acetyllysine. The HMG box 2 DNA-binding region spans 95 to 163; that stretch reads PKRPPSAFFL…KYEKDIAAYR (69 aa). Ser-100 is modified (phosphoserine). Cysteine sulfonic acid (-SO3H) is present on Cys-106. N6-acetyllysine occurs at positions 127, 128, 141, 172, 173, 177, and 180. The binding to AGER/RAGE stretch occupies residues 150-183; it reads KLKEKYEKDIAAYRAKGKPDAAKKGVVKAEKSKK. Positions 161–179 are enriched in basic and acidic residues; that stretch reads AYRAKGKPDAAKKGVVKAE. The segment at 161–215 is disordered; that stretch reads AYRAKGKPDAAKKGVVKAEKSKKKKEEEEDEEDEEDEEEEEDEEDEDEEEDDDDE. An NLS 2 region spans residues 178–184; that stretch reads AEKSKKK. The Nuclear localization signal (NLS) 2 motif lies at 178 to 184; the sequence is AEKSKKK. Lys-180 participates in a covalent cross-link: Isoglutamyl lysine isopeptide (Lys-Gln) (interchain with Q-?). Ser-181 is subject to ADP-ribosylserine. An N6-acetyllysine mark is found at Lys-182, Lys-183, Lys-184, and Lys-185. Residues Lys-182, Lys-183, and Lys-184 each participate in an isoglutamyl lysine isopeptide (Lys-Gln) (interchain with Q-?) cross-link. Positions 187–215 are enriched in acidic residues; the sequence is EEEDEEDEEDEEEEEDEEDEDEEEDDDDE.

The protein belongs to the HMGB family. In terms of assembly, interacts (fully reduced HMGB1) with CXCL12; probably in a 1:2 ratio involving two molecules of CXCL12, each interacting with one HMG box of HMGB1; inhibited by glycyrrhizin. Associates with the TLR4:LY96 receptor complex. Component of the RAG complex composed of core components RAG1 and RAG2, and associated component HMGB1 or HMGB2. Interacts (in cytoplasm upon starvation) with BECN1; inhibits the interaction of BECN1 and BCL2 leading to promotion of autophagy. Interacts with KPNA1; involved in nuclear import. Interacts with SREBF1, TLR2, TLR4, TLR9, PTPRZ1, APEX1, FEN1, POLB, TERT. Interacts with IL1B, AGER, MSH2, XPA, XPC, HNF1A, TP53. Interacts with CD24; the probable CD24:SIGLEC10 complex is proposed to inhibit HGMB1-mediated tissue damage immune response. Interacts with THBD; prevents HGMB1 interaction with ACER/RAGE and inhibits HGMB1 pro-inflammatory activity. Interacts with HAVCR2; impairs HMGB1 binding to B-DNA and likely HMGB1-mediated innate immune response. Interacts with XPO1; mediating nuclear export. Interacts with receptor RAGE/AGER. Phosphorylated at serine residues. Phosphorylation in both NLS regions is required for cytoplasmic translocation followed by secretion. Post-translationally, acetylated on multiple sites upon stimulation with LPS. Acetylation on lysine residues in the nuclear localization signals (NLS 1 and NLS 2) leads to cytoplasmic localization and subsequent secretion. Acetylation on Lys-3 results in preferential binding to DNA ends and impairs DNA bending activity. In terms of processing, reduction/oxidation of cysteine residues Cys-23, Cys-45 and Cys-106 and a possible intramolecular disulfide bond involving Cys-23 and Cys-45 give rise to different redox forms with specific functional activities in various cellular compartments: 1- fully reduced HMGB1 (HMGB1C23hC45hC106h), 2- disulfide HMGB1 (HMGB1C23-C45C106h) and 3- sulfonyl HMGB1 (HMGB1C23soC45soC106so). Poly-ADP-ribosylated by PARP1 when secreted following stimulation with LPS. Post-translationally, in vitro cleavage by CASP1 is liberating a HMG box 1-containing peptide which may mediate immunogenic activity; the peptide antagonizes apoptosis-induced immune tolerance. Can be proteolytically cleaved by a thrombin:thrombomodulin complex; reduces binding to heparin and pro-inflammatory activities. In terms of processing, forms covalent cross-links mediated by transglutaminase TGM2, between a glutamine and the epsilon-amino group of a lysine residue, forming homopolymers and heteropolymers.

It is found in the nucleus. The protein resides in the chromosome. It localises to the cytoplasm. The protein localises to the secreted. Its subcellular location is the cell membrane. It is found in the endosome. The protein resides in the endoplasmic reticulum-Golgi intermediate compartment. Its function is as follows. Multifunctional redox sensitive protein with various roles in different cellular compartments. In the nucleus is one of the major chromatin-associated non-histone proteins and acts as a DNA chaperone involved in replication, transcription, chromatin remodeling, V(D)J recombination, DNA repair and genome stability. Proposed to be an universal biosensor for nucleic acids. Promotes host inflammatory response to sterile and infectious signals and is involved in the coordination and integration of innate and adaptive immune responses. In the cytoplasm functions as a sensor and/or chaperone for immunogenic nucleic acids implicating the activation of TLR9-mediated immune responses, and mediates autophagy. Acts as a danger-associated molecular pattern (DAMP) molecule that amplifies immune responses during tissue injury. Released to the extracellular environment can bind DNA, nucleosomes, IL-1 beta, CXCL12, AGER isoform 2/sRAGE, lipopolysaccharide (LPS) and lipoteichoic acid (LTA), and activates cells through engagement of multiple surface receptors. In the extracellular compartment fully reduced HMGB1 (released by necrosis) acts as a chemokine, disulfide HMGB1 (actively secreted) as a cytokine, and sulfonyl HMGB1 (released from apoptotic cells) promotes immunological tolerance. Has proangiogenic activity. May be involved in platelet activation. Binds to phosphatidylserine and phosphatidylethanolamide. Bound to RAGE mediates signaling for neuronal outgrowth. May play a role in accumulation of expanded polyglutamine (polyQ) proteins. Functionally, nuclear functions are attributed to fully reduced HGMB1. Associates with chromatin and binds DNA with a preference to non-canonical DNA structures such as single-stranded DNA, DNA-containing cruciforms or bent structures, supercoiled DNA and ZDNA. Can bent DNA and enhance DNA flexibility by looping thus providing a mechanism to promote activities on various gene promoters by enhancing transcription factor binding and/or bringing distant regulatory sequences into close proximity. May be involved in nucleotide excision repair (NER), mismatch repair (MMR) and base excision repair (BER) pathways, and double strand break repair such as non-homologous end joining (NHEJ). Involved in V(D)J recombination by acting as a cofactor of the RAG complex: acts by stimulating cleavage and RAG protein binding at the 23 bp spacer of conserved recombination signal sequences (RSS). In vitro can displace histone H1 from highly bent DNA. Can restructure the canonical nucleosome leading to relaxation of structural constraints for transcription factor-binding. Enhances binding of sterol regulatory element-binding proteins (SREBPs) such as SREBF1 to their cognate DNA sequences and increases their transcriptional activities. Facilitates binding of TP53 to DNA. May be involved in mitochondrial quality control and autophagy in a transcription-dependent fashion implicating HSPB1. Can modulate the activity of the telomerase complex and may be involved in telomere maintenance. In terms of biological role, in the cytoplasm proposed to dissociate the BECN1:BCL2 complex via competitive interaction with BECN1 leading to autophagy activation. Can protect BECN1 and ATG5 from calpain-mediated cleavage and thus proposed to control their proautophagic and proapoptotic functions and to regulate the extent and severity of inflammation-associated cellular injury. In myeloid cells has a protective role against endotoxemia and bacterial infection by promoting autophagy. Involved in endosomal translocation and activation of TLR9 in response to CpG-DNA in macrophages. In the extracellular compartment (following either active secretion or passive release) involved in regulation of the inflammatory response. Fully reduced HGMB1 (which subsequently gets oxidized after release) in association with CXCL12 mediates the recruitment of inflammatory cells during the initial phase of tissue injury; the CXCL12:HMGB1 complex triggers CXCR4 homodimerization. Induces the migration of monocyte-derived immature dendritic cells and seems to regulate adhesive and migratory functions of neutrophils implicating AGER/RAGE and ITGAM. Can bind to various types of DNA and RNA including microbial unmethylated CpG-DNA to enhance the innate immune response to nucleic acids. Proposed to act in promiscuous DNA/RNA sensing which cooperates with subsequent discriminative sensing by specific pattern recognition receptors. Promotes extracellular DNA-induced AIM2 inflammasome activation implicating AGER/RAGE. Disulfide HMGB1 binds to transmembrane receptors, such as AGER/RAGE, TLR2, TLR4 and probably TREM1, thus activating their signal transduction pathways. Mediates the release of cytokines/chemokines such as TNF, IL-1, IL-6, IL-8, CCL2, CCL3, CCL4 and CXCL10. Promotes secretion of interferon-gamma by macrophage-stimulated natural killer (NK) cells in concert with other cytokines like IL-2 or IL-12. TLR4 is proposed to be the primary receptor promoting macrophage activation and signaling through TLR4 seems to implicate LY96/MD-2. In bacterial LPS- or LTA-mediated inflammatory responses binds to the endotoxins and transfers them to CD14 for signaling to the respective TLR4:LY96 and TLR2 complexes. Contributes to tumor proliferation by association with ACER/RAGE. Can bind to IL1-beta and signals through the IL1R1:IL1RAP receptor complex. Binding to class A CpG activates cytokine production in plasmacytoid dendritic cells implicating TLR9, MYD88 and AGER/RAGE and can activate autoreactive B cells. Via HMGB1-containing chromatin immune complexes may also promote B cell responses to endogenous TLR9 ligands through a B-cell receptor (BCR)-dependent and ACER/RAGE-independent mechanism. Inhibits phagocytosis of apoptotic cells by macrophages; the function is dependent on poly-ADP-ribosylation and involves binding to phosphatidylserine on the cell surface of apoptotic cells. In adaptive immunity may be involved in enhancing immunity through activation of effector T-cells and suppression of regulatory T (TReg) cells. In contrast, without implicating effector or regulatory T-cells, required for tumor infiltration and activation of T-cells expressing the lymphotoxin LTA:LTB heterotrimer thus promoting tumor malignant progression. Also reported to limit proliferation of T-cells. Released HMGB1:nucleosome complexes formed during apoptosis can signal through TLR2 to induce cytokine production. Involved in induction of immunological tolerance by apoptotic cells; its pro-inflammatory activities when released by apoptotic cells are neutralized by reactive oxygen species (ROS)-dependent oxidation specifically on Cys-106. During macrophage activation by activated lymphocyte-derived self apoptotic DNA (ALD-DNA) promotes recruitment of ALD-DNA to endosomes. This chain is High mobility group protein B1 (HMGB1), found in Canis lupus familiaris (Dog).